We begin with the raw amino-acid sequence, 74 residues long: Ferredoxin MycCII (74 aa).

In terms of domain architecture, 4Fe-4S ferredoxin-type spans 1–29 (MRIVLDAERCVGAGQCEATAPELFTQGDD). Residues Cys10, Cys16, and Cys54 each contribute to the [3Fe-4S] cluster site.

[3Fe-4S] cluster serves as cofactor.

It participates in antibiotic biosynthesis; mycinamicin biosynthesis. Its function is as follows. Specific electron transport protein capable of effectively supporting cytochrome P450 MycCI activity in the biosynthesis of mycinamicin, a 16-membered macrolide antibiotic. The protein is Ferredoxin MycCII of Micromonospora griseorubida.